The sequence spans 84 residues: uncharacterized protein (84 aa).

This is an uncharacterized protein from Bos taurus (Bovine).